We begin with the raw amino-acid sequence, 127 residues long: Small ribosomal subunit protein uS11 (127 aa).

This sequence belongs to the universal ribosomal protein uS11 family. As to quaternary structure, part of the 30S ribosomal subunit. Interacts with proteins S7 and S18. Binds to IF-3.

Located on the platform of the 30S subunit, it bridges several disparate RNA helices of the 16S rRNA. Forms part of the Shine-Dalgarno cleft in the 70S ribosome. This is Small ribosomal subunit protein uS11 from Streptococcus mutans serotype c (strain ATCC 700610 / UA159).